Here is a 61-residue protein sequence, read N- to C-terminus: Short neurotoxin 1 (61 aa).

Cystine bridges form between Cys-3–Cys-23, Cys-17–Cys-40, Cys-42–Cys-53, and Cys-54–Cys-59.

The protein belongs to the three-finger toxin family. Short-chain subfamily. Type I alpha-neurotoxin sub-subfamily. Expressed by the venom gland.

The protein resides in the secreted. Its function is as follows. Binds to muscle nicotinic acetylcholine receptor (nAChR) and inhibit acetylcholine from binding to the receptor, thereby impairing neuromuscular transmission. The chain is Short neurotoxin 1 from Naja samarensis (Peters' cobra).